The sequence spans 118 residues: Small ribosomal subunit protein uS13 (118 aa).

Residues 93–118 (RNLPVRGQRSKTNARTRKGPRKPIKR) form a disordered region.

Belongs to the universal ribosomal protein uS13 family. In terms of assembly, part of the 30S ribosomal subunit. Forms a loose heterodimer with protein S19. Forms two bridges to the 50S subunit in the 70S ribosome.

Located at the top of the head of the 30S subunit, it contacts several helices of the 16S rRNA. In the 70S ribosome it contacts the 23S rRNA (bridge B1a) and protein L5 of the 50S subunit (bridge B1b), connecting the 2 subunits; these bridges are implicated in subunit movement. Contacts the tRNAs in the A and P-sites. This Saccharophagus degradans (strain 2-40 / ATCC 43961 / DSM 17024) protein is Small ribosomal subunit protein uS13.